A 403-amino-acid chain; its full sequence is Argininosuccinate synthase (403 aa).

ATP-binding positions include 13 to 21 and alanine 40; that span reads AYSGGLDTS. Residues tyrosine 91 and serine 96 each coordinate L-citrulline. Glycine 121 contacts ATP. L-aspartate contacts are provided by threonine 123, asparagine 127, and aspartate 128. Asparagine 127 provides a ligand contact to L-citrulline. 5 residues coordinate L-citrulline: arginine 131, serine 180, serine 189, glutamate 265, and tyrosine 277.

It belongs to the argininosuccinate synthase family. Type 1 subfamily. Homotetramer.

It localises to the cytoplasm. The catalysed reaction is L-citrulline + L-aspartate + ATP = 2-(N(omega)-L-arginino)succinate + AMP + diphosphate + H(+). The protein operates within amino-acid biosynthesis; L-arginine biosynthesis; L-arginine from L-ornithine and carbamoyl phosphate: step 2/3. The chain is Argininosuccinate synthase from Leptospira interrogans serogroup Icterohaemorrhagiae serovar copenhageni (strain Fiocruz L1-130).